The sequence spans 218 residues: Ras-related protein Rab11D (218 aa).

20–27 (GDSGVGKS) contacts GTP. The Effector region motif lies at 42–50 (SKSTIGVEF). GTP is bound by residues 68–72 (DTAGQ) and 126–129 (NKSD). Residues Cys215 and Cys216 are each lipidated (S-geranylgeranyl cysteine).

The protein belongs to the small GTPase superfamily. Rab family.

The protein resides in the cell membrane. The protein is Ras-related protein Rab11D (RAB11D) of Lotus japonicus (Lotus corniculatus var. japonicus).